Here is a 149-residue protein sequence, read N- to C-terminus: Ribosome maturation factor RimP (149 aa).

This sequence belongs to the RimP family.

It localises to the cytoplasm. Functionally, required for maturation of 30S ribosomal subunits. This Sulfurimonas denitrificans (strain ATCC 33889 / DSM 1251) (Thiomicrospira denitrificans (strain ATCC 33889 / DSM 1251)) protein is Ribosome maturation factor RimP.